The following is a 177-amino-acid chain: Ferritin light chain, oocyte isoform (177 aa).

One can recognise a Ferritin-like diiron domain in the interval 9 to 158 (QNYHEESEAG…DHLTNLRRVK (150 aa)). Residues Glu-26, His-64, and Glu-106 each contribute to the Fe cation site.

Belongs to the ferritin family. As to quaternary structure, oligomer of 24 subunits. There are two types of subunits: L (light) chain and H (heavy) chain. The functional molecule is roughly spherical and contains a central cavity into which the insoluble mineral iron core is deposited.

In terms of biological role, stores iron in a soluble, non-toxic, readily available form. Important for iron homeostasis. Iron is taken up in the ferrous form and deposited as ferric hydroxides after oxidation. The polypeptide is Ferritin light chain, oocyte isoform (Xenopus laevis (African clawed frog)).